Here is an 82-residue protein sequence, read N- to C-terminus: Putative membrane protein insertion efficiency factor (82 aa).

This sequence belongs to the UPF0161 family.

The protein resides in the cell inner membrane. Functionally, could be involved in insertion of integral membrane proteins into the membrane. The protein is Putative membrane protein insertion efficiency factor of Thermus thermophilus (strain ATCC BAA-163 / DSM 7039 / HB27).